The chain runs to 290 residues: Ribosomal RNA small subunit methyltransferase A (290 aa).

6 residues coordinate S-adenosyl-L-methionine: asparagine 27, leucine 29, glycine 54, glutamate 75, aspartate 100, and asparagine 125.

It belongs to the class I-like SAM-binding methyltransferase superfamily. rRNA adenine N(6)-methyltransferase family. RsmA subfamily.

Its subcellular location is the cytoplasm. The enzyme catalyses adenosine(1518)/adenosine(1519) in 16S rRNA + 4 S-adenosyl-L-methionine = N(6)-dimethyladenosine(1518)/N(6)-dimethyladenosine(1519) in 16S rRNA + 4 S-adenosyl-L-homocysteine + 4 H(+). In terms of biological role, specifically dimethylates two adjacent adenosines (A1518 and A1519) in the loop of a conserved hairpin near the 3'-end of 16S rRNA in the 30S particle. May play a critical role in biogenesis of 30S subunits. In Streptococcus equi subsp. zooepidemicus (strain H70), this protein is Ribosomal RNA small subunit methyltransferase A.